The primary structure comprises 571 residues: Proline--tRNA ligase (571 aa).

It belongs to the class-II aminoacyl-tRNA synthetase family. ProS type 1 subfamily. In terms of assembly, homodimer.

Its subcellular location is the cytoplasm. The enzyme catalyses tRNA(Pro) + L-proline + ATP = L-prolyl-tRNA(Pro) + AMP + diphosphate. Functionally, catalyzes the attachment of proline to tRNA(Pro) in a two-step reaction: proline is first activated by ATP to form Pro-AMP and then transferred to the acceptor end of tRNA(Pro). As ProRS can inadvertently accommodate and process non-cognate amino acids such as alanine and cysteine, to avoid such errors it has two additional distinct editing activities against alanine. One activity is designated as 'pretransfer' editing and involves the tRNA(Pro)-independent hydrolysis of activated Ala-AMP. The other activity is designated 'posttransfer' editing and involves deacylation of mischarged Ala-tRNA(Pro). The misacylated Cys-tRNA(Pro) is not edited by ProRS. This is Proline--tRNA ligase from Acinetobacter baumannii (strain AB307-0294).